A 299-amino-acid polypeptide reads, in one-letter code: MGAPKQKWTPEEEAALKAGVLKHGTGKWRTILSDTEFSLILKSRSNVDLKDKWRNISVTALWGSRKKAKLALKRTPPGTKQDDNNTALTIVALTNDDERAKPTSPGGSGGGSPRTCASKRSITSLDKIIFEAITNLRELRGSDRTSIFLYIEENFKTPPNMKRHVAVRLKHLSSNGTLVKIKHKYRFSSNFIPAGARQKAPQLFLEGNNKKDPTKPEENGANSLTKFRVDGELYMIKGMTAQEAAEAAARAVAEAEFAITEAEQAAKEAERAEAEAEAAQIFAKAAMKALKFRIRNHPW.

The region spanning 1–61 (MGAPKQKWTP…KWRNISVTAL (61 aa)) is the HTH myb-type domain. The segment at residues 28-57 (WRTILSDTEFSLILKSRSNVDLKDKWRNIS) is a DNA-binding region (H-T-H motif). Residues 93 to 116 (LTNDDERAKPTSPGGSGGGSPRTC) form a disordered region. In terms of domain architecture, H15 spans 121-189 (SITSLDKIIF…KIKHKYRFSS (69 aa)). Residues 243 to 288 (EAAEAAARAVAEAEFAITEAEQAAKEAERAEAEAEAAQIFAKAAMK) adopt a coiled-coil conformation.

It belongs to the histone H1/H5 family. SMH subfamily. Forms a homodimer and heterodimers with TRB1 or TRB3. Interacts with TRB1 and TRB3. In terms of tissue distribution, ubiquitous.

It localises to the nucleus. It is found in the nucleolus. The protein localises to the chromosome. Functionally, binds preferentially double-stranded telomeric repeats, but it can also bind to the single G-rich telomeric strand. This chain is Telomere repeat-binding factor 2 (TRB2), found in Arabidopsis thaliana (Mouse-ear cress).